Consider the following 311-residue polypeptide: MEPIGRSLQGVTGRPDFQKRLEQMKEKVMKDQDVQAFLKENEEVIDQKMIEKSLNKLYEYIEQSKNCSYCSEDENCNNLLEGYHPKLVVNGRSIDIEYYECPVKRKLDQQKKQQSLMKSMYIQQDLLGATFQQVDISDPSRLAMFQHVTDFLKSYNETGKGKGLYLYGKFGVGKTFMLAAIANELAEKEYSSMIVYVPEFVRELKNSLQDQTLEEKLNMVKTTPVLMLDDIGAESMTSWVRDEVIGTVLQHRMSQQLPTFFSSNFSPDELKHHFTYSQRGEKEEVKAARLMERILYLAAPIRLDGENRRHP.

Residues 1–136 (MEPIGRSLQG…LGATFQQVDI (136 aa)) are N-terminal domain (Nd). 4 residues coordinate Zn(2+): cysteine 67, cysteine 70, histidine 84, and cysteine 101. The segment at 137 to 311 (SDPSRLAMFQ…RLDGENRRHP (175 aa)) is C-terminal domain (Cd). Residue 168–175 (GKFGVGKT) coordinates ATP.

It belongs to the DnaI family. The DNA replisome assembles sequentially on oriC in this order; DnaA, DnaD, DnaB, DnaI-DnaC helicase. Monomer with a very minor amount of dimer in solution. Interacts with replicative helicase (from G.stearothermophilus, called DnaB); this interaction is disrupted by DnaD. Interacts with replicative helicase DnaC, forms a DnaC(6):DnaI(6) complex. Interacts with the helicase as 3 dimers. A stable complex with DnaG primase, DnaI(6):helicase(6):DnaG(3) fragment can be isolated; DnaI and DnaG do not contact each other (helicase and DnaG in this complex are derived from G.stearothermophilus). It depends on Zn(2+) as a cofactor.

Its subcellular location is the cytoplasm. It catalyses the reaction ATP + H2O = ADP + phosphate + H(+). Helps load the DnaC replicative helicase onto single-stranded (ss)DNA and simulates the helicase activity; in the presence of DnaB more helicase activity is seen. Regulates DnaC helicase activity, at low concentrations stimulates the DNA helicase and ATPase activities of DnaC. Has no measurable ATPase activity after 1 hour incubation of 6 uM DnaI with or without DNA. Another group has found the protein has weak ATPase activity that is not stimulated by ssDNA. Whole protein binds forked DNA (but not ssDNA) weakly; ATP and ADPNP (probably 5'-adenylyl beta, gamma-imidodiphosphate) have no effect on DNA binding. DnaB, DnaD and DnaI may be required for a PriA-independent pathway of replication fork restart. The polypeptide is Replicative helicase loader DnaI (Bacillus subtilis (strain 168)).